We begin with the raw amino-acid sequence, 1942 residues long: Myosin-2 (1942 aa).

The 50-residue stretch at 33–82 folds into the Myosin N-terminal SH3-like domain; sequence DAKTSVFVAEPKESFVKGTIQSKDAGKVTVKTEAGATLTVKEDQIFPMNP. Thr-64 and Thr-69 each carry phosphothreonine. The region spanning 86–785 is the Myosin motor domain; it reads DKIEDMAMMT…LLGLLEEMRD (700 aa). ATP is bound at residue 179 to 186; it reads GESGAGKT. A Phosphotyrosine modification is found at Tyr-389. Thr-419 bears the Phosphothreonine mark. Ser-625 carries the phosphoserine modification. The actin-binding stretch occupies residues 662–684; it reads LNKLMTNLRSTHPHFVRCIIPNE. A Pros-methylhistidine modification is found at His-760. Residues 788–817 form the IQ domain; that stretch reads LAQLITRTQAMCRGFLARVEYQKMVERRES. Residues 849–1930 are a coiled coil; sequence SAETEKEMAT…ESQVNKLRVK (1082 aa). Phosphoserine is present on residues Ser-1095 and Ser-1099. The interval 1130–1175 is disordered; sequence EAERASRAKAEKQRSDLSRELEEISERLEEAGGATSAQIEMNKKRE. Residues 1131 to 1159 are compositionally biased toward basic and acidic residues; sequence AERASRAKAEKQRSDLSRELEEISERLEE. Residues Ser-1165 and Ser-1240 each carry the phosphoserine modification. Residue Thr-1244 is modified to Phosphothreonine. The residue at position 1246 (Ser-1246) is a Phosphoserine. The residue at position 1258 (Thr-1258) is a Phosphothreonine. Ser-1264 carries the phosphoserine modification. Thr-1289 bears the Phosphothreonine mark. A phosphoserine mark is found at Ser-1291, Ser-1295, Ser-1306, and Ser-1309. Tyr-1467 is subject to Phosphotyrosine. Thr-1470 is subject to Phosphothreonine. Ser-1477 is subject to Phosphoserine. Phosphotyrosine is present on Tyr-1495. At Ser-1498 the chain carries Phosphoserine. Thr-1504 is subject to Phosphothreonine. Ser-1517 bears the Phosphoserine mark. Position 1520 is a phosphothreonine (Thr-1520). A phosphoserine mark is found at Ser-1557, Ser-1577, Ser-1603, Ser-1606, Ser-1717, and Ser-1729. 2 positions are modified to phosphothreonine: Thr-1733 and Thr-1739. Residue Ser-1742 is modified to Phosphoserine.

This sequence belongs to the TRAFAC class myosin-kinesin ATPase superfamily. Myosin family. As to quaternary structure, muscle myosin is a hexameric protein that consists of 2 heavy chain subunits (MHC), 2 alkali light chain subunits (MLC) and 2 regulatory light chain subunits (MLC-2). Interacts with GCSAM. Expressed in type 2a myofibers in the tibialis anterior and soleus muscles (at protein level).

The protein localises to the cytoplasm. The protein resides in the myofibril. Myosins are actin-based motor molecules with ATPase activity essential for muscle contraction. The polypeptide is Myosin-2 (Mus musculus (Mouse)).